Consider the following 736-residue polypeptide: Phosphoribosylformylglycinamidine synthase subunit PurL (736 aa).

Residue His49 is part of the active site. Residues Tyr52 and Lys91 each contribute to the ATP site. Glu93 lines the Mg(2+) pocket. Residues 94 to 97 and Arg116 each bind substrate; that span reads SHNH. The active-site Proton acceptor is His95. Asp117 lines the Mg(2+) pocket. Gln240 is a binding site for substrate. Residue Asp268 coordinates Mg(2+). 312–314 contributes to the substrate binding site; it reads ESQ. ATP-binding residues include Asp493 and Gly530. A Mg(2+)-binding site is contributed by Asn531. Ser533 is a binding site for substrate.

Belongs to the FGAMS family. Monomer. Part of the FGAM synthase complex composed of 1 PurL, 1 PurQ and 2 PurS subunits.

Its subcellular location is the cytoplasm. It carries out the reaction N(2)-formyl-N(1)-(5-phospho-beta-D-ribosyl)glycinamide + L-glutamine + ATP + H2O = 2-formamido-N(1)-(5-O-phospho-beta-D-ribosyl)acetamidine + L-glutamate + ADP + phosphate + H(+). It functions in the pathway purine metabolism; IMP biosynthesis via de novo pathway; 5-amino-1-(5-phospho-D-ribosyl)imidazole from N(2)-formyl-N(1)-(5-phospho-D-ribosyl)glycinamide: step 1/2. Its function is as follows. Part of the phosphoribosylformylglycinamidine synthase complex involved in the purines biosynthetic pathway. Catalyzes the ATP-dependent conversion of formylglycinamide ribonucleotide (FGAR) and glutamine to yield formylglycinamidine ribonucleotide (FGAM) and glutamate. The FGAM synthase complex is composed of three subunits. PurQ produces an ammonia molecule by converting glutamine to glutamate. PurL transfers the ammonia molecule to FGAR to form FGAM in an ATP-dependent manner. PurS interacts with PurQ and PurL and is thought to assist in the transfer of the ammonia molecule from PurQ to PurL. The protein is Phosphoribosylformylglycinamidine synthase subunit PurL of Rhodopseudomonas palustris (strain TIE-1).